A 341-amino-acid polypeptide reads, in one-letter code: MGSTCVRIAIDAMGGDHAPNEIVAGAVRASEELGVKVLLVGDPQQIASALPPKTNLERVEIVPAEEAIAMDEEPLNAVRRKRKASINVAMDLVKREQADAIFSAGHSGAAMASALLRLGRLPGVDRPAIGTVFPTIKAGKPVLILDVGANVDCRPKFLEQFAVIGSIYSQYVLGTGEPKVGLLNIGEEDTKGNELALRTHQLLKDNSNINFIGNAEGRDVLSGEFDVIVCDGFVGNILLKFAEAIGGVILQILREELPQGLHGQIGTAILKPNLKRIKQRMDHAEHGGALLLGVSGVCLIGHGSSQAPSVFNAIRMAKEAVDNQVMQQLQSQYEILHSTSD.

Belongs to the PlsX family. Homodimer. Probably interacts with PlsY.

Its subcellular location is the cytoplasm. It catalyses the reaction a fatty acyl-[ACP] + phosphate = an acyl phosphate + holo-[ACP]. It functions in the pathway lipid metabolism; phospholipid metabolism. Catalyzes the reversible formation of acyl-phosphate (acyl-PO(4)) from acyl-[acyl-carrier-protein] (acyl-ACP). This enzyme utilizes acyl-ACP as fatty acyl donor, but not acyl-CoA. This chain is Phosphate acyltransferase, found in Nostoc sp. (strain PCC 7120 / SAG 25.82 / UTEX 2576).